Here is a 283-residue protein sequence, read N- to C-terminus: uncharacterized protein (283 aa).

A disordered region spans residues 1 to 21 (MSAYTHPMERELSGLSSRGNS). The chain crosses the membrane as a helical span at residues 41-61 (SIFIASLVTFGVLMITLLIAL).

The protein belongs to the APS1/VSP family.

The protein localises to the membrane. This is an uncharacterized protein from Arabidopsis thaliana (Mouse-ear cress).